A 613-amino-acid chain; its full sequence is Azole resistance protein 1 (613 aa).

The disordered stretch occupies residues 1 to 38; the sequence is MKGEPKTYSMSDLSYYGEKAQQQNEKQQKQYVVRRNST. Residues 1–70 are Extracellular-facing; the sequence is MKGEPKTYSM…PKGFILYASL (70 aa). The helical transmembrane segment at 71–91 threads the bilayer; it reads IALALSLFLAALDIMIVSTII. The Cytoplasmic portion of the chain corresponds to 92 to 102; sequence EEVAKQFGSYS. A helical transmembrane segment spans residues 103 to 123; the sequence is EIGWLFTGYSLPNALLALIWG. Topologically, residues 124 to 134 are extracellular; the sequence is RIATPIGFKET. A helical transmembrane segment spans residues 135 to 155; the sequence is MLFAIVIFEIGSLISALANSM. Residues 156-163 are Cytoplasmic-facing; sequence SMLIGGRV. The chain crosses the membrane as a helical span at residues 164-184; that stretch reads IAGVGGCGIQSLSFVIGSTLV. Over 185–189 the chain is Extracellular; that stretch reads EESQR. The chain crosses the membrane as a helical span at residues 190-210; it reads GILIAVLSCSFAIASVVGPFL. Topologically, residues 211–221 are cytoplasmic; that stretch reads GGVFTSSVTWR. Residues 222–242 traverse the membrane as a helical segment; it reads WCFYVNLPIGGLAFFLFLFFY. Topologically, residues 243–298 are extracellular; that stretch reads NPGLSTFQETMDNIRKFPSQFIEIVRNVAYHLLKIKGFSKLNGWRKPFMELIFMYD. Residues 299-319 traverse the membrane as a helical segment; that stretch reads IIEFVFCSAGFTCILLAFTFG. Over 320 to 329 the chain is Cytoplasmic; the sequence is GNRYAWNSAS. Residues 330 to 350 traverse the membrane as a helical segment; that stretch reads IIILFIIGIVLVVLAGIYDFL. At 351–375 the chain is on the extracellular side; sequence VFPKFNIVKATPHYQPLMSWTNIKK. A helical membrane pass occupies residues 376-396; sequence PGIFTVNIALFLTCAGYISQF. The Cytoplasmic portion of the chain corresponds to 397–414; it reads TYIVQYFQLIYNDSAWRA. Residues 415–435 traverse the membrane as a helical segment; it reads AVHLVACIISTVVTAILCGAI. At 436–443 the chain is on the extracellular side; that stretch reads TDKTRQIK. Residues 444–464 form a helical membrane-spanning segment; sequence PIIVISSIFGVVGAGILTLLN. Over 465–472 the chain is Cytoplasmic; it reads NNANNSAH. The chain crosses the membrane as a helical span at residues 473–493; sequence IGLLILPGVAFGGLAQSSMLA. Topologically, residues 494-581 are extracellular; it reads SQIQLDKKSP…SKLGNIISES (88 aa). Residues 582 to 602 traverse the membrane as a helical segment; it reads LTDVFYMALGFYALSLIFAVF. Residues 603 to 613 are Cytoplasmic-facing; it reads ASNKKVTASLR.

Belongs to the major facilitator superfamily.

The protein resides in the cell membrane. Its function is as follows. Transporter protein required for adaptation to high stress imposed by low-chain organic acids, in particular by acetic acid, and for resistance to azoles, especially to ketoconazole and fluconazole. The polypeptide is Azole resistance protein 1 (AZR1) (Saccharomyces cerevisiae (strain ATCC 204508 / S288c) (Baker's yeast)).